The chain runs to 119 residues: Holo-[acyl-carrier-protein] synthase (119 aa).

Mg(2+) is bound by residues Asp6 and Glu51.

It belongs to the P-Pant transferase superfamily. AcpS family. Mg(2+) serves as cofactor.

The protein resides in the cytoplasm. It catalyses the reaction apo-[ACP] + CoA = holo-[ACP] + adenosine 3',5'-bisphosphate + H(+). Functionally, transfers the 4'-phosphopantetheine moiety from coenzyme A to a Ser of acyl-carrier-protein. The sequence is that of Holo-[acyl-carrier-protein] synthase from Sulfurovum sp. (strain NBC37-1).